Here is a 409-residue protein sequence, read N- to C-terminus: G2/mitotic-specific cyclin-B (409 aa).

Belongs to the cyclin family. Cyclin AB subfamily. Interacts with the CDK1 protein kinase to form a serine/threonine kinase holoenzyme complex also known as maturation promoting factor (MPF). The cyclin subunit imparts substrate specificity to the complex.

In terms of biological role, essential for the control of the cell cycle at the G2/M (mitosis) transition. This is G2/mitotic-specific cyclin-B from Arbacia punctulata (Punctuate sea urchin).